Consider the following 153-residue polypeptide: Ribosome maturation factor RimP (153 aa).

This sequence belongs to the RimP family.

The protein resides in the cytoplasm. In terms of biological role, required for maturation of 30S ribosomal subunits. This is Ribosome maturation factor RimP from Rippkaea orientalis (strain PCC 8801 / RF-1) (Cyanothece sp. (strain PCC 8801)).